The following is a 536-amino-acid chain: Probable E3 ubiquitin-protein ligase ARI13 (536 aa).

Residues 83–328 are TRIAD supradomain; it reads KISSCGICFK…GFYKFCNVSM (246 aa). Residues C87, C90, C106, H108, C111, C114, C135, C140, C180, C185, C210, C212, C217, C220, H225, C230, C277, C280, C297, C299, C304, C307, H314, and C324 each coordinate Zn(2+). Residues 87–140 form an RING-type 1 zinc finger; sequence CGICFKTCDDGDYLISTPFCSHMFCKSCWRKYLEKNFYLVEKTQTRISCPHGAC. The IBR-type zinc-finger motif lies at 158 to 230; it reads EMYVEYILRS…MLESHKPVTC (73 aa). The RING-type 2; atypical zinc finger occupies 277 to 307; sequence CPHCLRPADLGTKQYLRFLTCACNGRFCWKC. The RanBP2-type zinc finger occupies 495-526; it reads DYGGLFWLCDRCTYGNTWFHKECLMCSDDIAA.

The protein belongs to the RBR family. Ariadne subfamily. The cofactor is Zn(2+).

The enzyme catalyses [E2 ubiquitin-conjugating enzyme]-S-ubiquitinyl-L-cysteine + [acceptor protein]-L-lysine = [E2 ubiquitin-conjugating enzyme]-L-cysteine + [acceptor protein]-N(6)-ubiquitinyl-L-lysine.. Its pathway is protein modification; protein ubiquitination. In terms of biological role, might act as an E3 ubiquitin-protein ligase, or as part of E3 complex, which accepts ubiquitin from specific E2 ubiquitin-conjugating enzymes and then transfers it to substrates. This is Probable E3 ubiquitin-protein ligase ARI13 (ARI13) from Arabidopsis thaliana (Mouse-ear cress).